We begin with the raw amino-acid sequence, 548 residues long: Protoporphyrinogen oxidase, chloroplastic (548 aa).

The N-terminal 50 residues, 1-50 (MTTTPIANHPNIFTHQSSSSPLAFLNRTSFIPFSSISKRNSVNCNGWRTR), are a transit peptide targeting the chloroplast. Residues 78 to 83 (GAGISG), 101 to 102 (EA), and 123 to 126 (GPNS) contribute to the FAD site. Residues 265-279 (KERSSTPKAPRDPRL) show a composition bias toward basic and acidic residues. The tract at residues 265 to 287 (KERSSTPKAPRDPRLPKPKGQTV) is disordered. Position 522–524 (522–524 (VAL)) interacts with FAD.

It belongs to the protoporphyrinogen/coproporphyrinogen oxidase family. Protoporphyrinogen oxidase subfamily. Homodimer. Requires FAD as cofactor.

The protein localises to the plastid. Its subcellular location is the chloroplast. It catalyses the reaction protoporphyrinogen IX + 3 O2 = protoporphyrin IX + 3 H2O2. It functions in the pathway porphyrin-containing compound metabolism; protoporphyrin-IX biosynthesis; protoporphyrin-IX from protoporphyrinogen-IX: step 1/1. The protein operates within porphyrin-containing compound metabolism; chlorophyll biosynthesis. Functionally, catalyzes the 6-electron oxidation of protoporphyrinogen-IX to form protoporphyrin-IX. The protein is Protoporphyrinogen oxidase, chloroplastic (PPXI) of Nicotiana tabacum (Common tobacco).